Consider the following 459-residue polypeptide: Hypotaurine/taurine--pyruvate aminotransferase (459 aa).

Lysine 287 is modified (N6-(pyridoxal phosphate)lysine).

The protein belongs to the class-III pyridoxal-phosphate-dependent aminotransferase family. Pyridoxal 5'-phosphate is required as a cofactor.

The catalysed reaction is hypotaurine + pyruvate = 2-sulfinoacetaldehyde + L-alanine. The enzyme catalyses taurine + pyruvate = sulfoacetaldehyde + L-alanine. It functions in the pathway organosulfur degradation. Functionally, converts hypotaurine to alanine and sulfinoacetaldehyde, which desulfinates spontaneously to acetaldehyde and sulfite. Can also catalyze the degradation of taurine into alanine and sulfoacetaldehyde, which is stable. Has 2-fold higher aminotransferase activity with hypotaurine as the substrate. This Paracoccus denitrificans (strain Pd 1222) protein is Hypotaurine/taurine--pyruvate aminotransferase.